Here is a 194-residue protein sequence, read N- to C-terminus: Peptidyl-tRNA hydrolase (194 aa).

TRNA is bound at residue tyrosine 16. Histidine 21 serves as the catalytic Proton acceptor. TRNA-binding residues include phenylalanine 67, asparagine 69, and asparagine 115.

The protein belongs to the PTH family. Monomer.

Its subcellular location is the cytoplasm. The catalysed reaction is an N-acyl-L-alpha-aminoacyl-tRNA + H2O = an N-acyl-L-amino acid + a tRNA + H(+). In terms of biological role, hydrolyzes ribosome-free peptidyl-tRNAs (with 1 or more amino acids incorporated), which drop off the ribosome during protein synthesis, or as a result of ribosome stalling. Catalyzes the release of premature peptidyl moieties from peptidyl-tRNA molecules trapped in stalled 50S ribosomal subunits, and thus maintains levels of free tRNAs and 50S ribosomes. The protein is Peptidyl-tRNA hydrolase of Citrobacter koseri (strain ATCC BAA-895 / CDC 4225-83 / SGSC4696).